The chain runs to 456 residues: Argininosuccinate lyase (456 aa).

It belongs to the lyase 1 family. Argininosuccinate lyase subfamily.

The protein localises to the cytoplasm. The enzyme catalyses 2-(N(omega)-L-arginino)succinate = fumarate + L-arginine. It functions in the pathway amino-acid biosynthesis; L-arginine biosynthesis; L-arginine from L-ornithine and carbamoyl phosphate: step 3/3. The polypeptide is Argininosuccinate lyase (Shewanella amazonensis (strain ATCC BAA-1098 / SB2B)).